The chain runs to 315 residues: Transaldolase (315 aa).

The active-site Schiff-base intermediate with substrate is the Lys-128.

The protein belongs to the transaldolase family. Type 1 subfamily. In terms of assembly, homodimer.

It is found in the cytoplasm. It catalyses the reaction D-sedoheptulose 7-phosphate + D-glyceraldehyde 3-phosphate = D-erythrose 4-phosphate + beta-D-fructose 6-phosphate. It participates in carbohydrate degradation; pentose phosphate pathway; D-glyceraldehyde 3-phosphate and beta-D-fructose 6-phosphate from D-ribose 5-phosphate and D-xylulose 5-phosphate (non-oxidative stage): step 2/3. Transaldolase is important for the balance of metabolites in the pentose-phosphate pathway. In Opitutus terrae (strain DSM 11246 / JCM 15787 / PB90-1), this protein is Transaldolase.